The chain runs to 183 residues: Thioredoxin/glutathione peroxidase BtuE (183 aa).

C37 is an active-site residue.

The protein belongs to the glutathione peroxidase family. BtuE subfamily.

The protein localises to the periplasm. The catalysed reaction is 2 glutathione + H2O2 = glutathione disulfide + 2 H2O. The enzyme catalyses a hydroperoxide + [thioredoxin]-dithiol = an alcohol + [thioredoxin]-disulfide + H2O. In terms of biological role, non-specific peroxidase that can use thioredoxin or glutathione as a reducing agent. In vitro, utilizes preferentially thioredoxin A to decompose hydrogen peroxide as well as cumene-, tert-butyl-, and linoleic acid hydroperoxides, suggesting that it may have one or more organic hydroperoxide as its physiological substrate. The chain is Thioredoxin/glutathione peroxidase BtuE from Escherichia coli (strain K12).